The chain runs to 309 residues: Clotting factor G beta subunit (309 aa).

The first 31 residues, 1–31, serve as a signal peptide directing secretion; that stretch reads MDISFLVFITLSMALFSSNVTGTSVTSRVRR. Intrachain disulfides connect Cys-38/Cys-158, Cys-74/Cys-90, Cys-205/Cys-227, and Cys-238/Cys-268. Residues 47-292 form the Peptidase S1 domain; sequence IIGGGIATPH…YVNWLQEITF (246 aa). His-89 serves as the catalytic Charge relay system. N-linked (GlcNAc...) asparagine glycosylation is present at Asn-100. Asp-138 functions as the Charge relay system in the catalytic mechanism. Residue Asn-206 is glycosylated (N-linked (GlcNAc...) asparagine). Ser-242 acts as the Charge relay system in catalysis.

This sequence belongs to the peptidase S1 family. Clotting factor G is a heterodimer composed of two non-covalently associated subunits, alpha and beta. Upon activation, converted to a two-chain active form linked by a disulfide bond. Forms a covalent heterodimer with intracellular coagulation inhibitor 3/LICI-3. In terms of tissue distribution, expressed in the hemocytes (at protein level).

It carries out the reaction Selective cleavage of 98-Arg-|-Ile-99 bond in Limulus proclotting enzyme to form active clotting enzyme.. With respect to regulation, binding to (1-&gt;3)-beta-D-glucan to alpha subunit, induces autocatalysis and activation of beta subunit. Inhibited by intracellular coagulation inhibitor 3/LICI-3 and to a lesser extend by intracellular coagulation inhibitor 2/LICI-2. Functionally, component of the heterodimer clotting factor G which may play a role in defense mechanisms against fungi. Initiates a (1-&gt;3)-beta-glucan-sensing clotting pathway whereby the alpha subunit binds to glucans containing (1-&gt;3)-beta linkages, which are components of the fungal cell wall, and the beta subunit catalyzes the activation of proclotting enzyme. The protein is Clotting factor G beta subunit of Tachypleus tridentatus (Japanese horseshoe crab).